Reading from the N-terminus, the 601-residue chain is Elongation factor 4 (601 aa).

In terms of domain architecture, tr-type G spans 7–189 (ELIRNFSIIA…ALVTRLPPPK (183 aa)). Residues 19–24 (DHGKST) and 136–139 (NKID) each bind GTP.

The protein belongs to the TRAFAC class translation factor GTPase superfamily. Classic translation factor GTPase family. LepA subfamily.

The protein localises to the cell inner membrane. It catalyses the reaction GTP + H2O = GDP + phosphate + H(+). Required for accurate and efficient protein synthesis under certain stress conditions. May act as a fidelity factor of the translation reaction, by catalyzing a one-codon backward translocation of tRNAs on improperly translocated ribosomes. Back-translocation proceeds from a post-translocation (POST) complex to a pre-translocation (PRE) complex, thus giving elongation factor G a second chance to translocate the tRNAs correctly. Binds to ribosomes in a GTP-dependent manner. The chain is Elongation factor 4 from Acidiphilium cryptum (strain JF-5).